The sequence spans 124 residues: Small ribosomal subunit protein uS12 (124 aa).

The disordered stretch occupies residues 1 to 32 (MPTIQQLVRKGRQDKVEKTKTPALKGSPQRRG). The segment covering 11–20 (GRQDKVEKTK) has biased composition (basic and acidic residues). Asp89 bears the 3-methylthioaspartic acid mark.

It belongs to the universal ribosomal protein uS12 family. As to quaternary structure, part of the 30S ribosomal subunit. Contacts proteins S8 and S17. May interact with IF1 in the 30S initiation complex.

Functionally, with S4 and S5 plays an important role in translational accuracy. In terms of biological role, interacts with and stabilizes bases of the 16S rRNA that are involved in tRNA selection in the A site and with the mRNA backbone. Located at the interface of the 30S and 50S subunits, it traverses the body of the 30S subunit contacting proteins on the other side and probably holding the rRNA structure together. The combined cluster of proteins S8, S12 and S17 appears to hold together the shoulder and platform of the 30S subunit. The protein is Small ribosomal subunit protein uS12 of Frankia alni (strain DSM 45986 / CECT 9034 / ACN14a).